The following is a 547-amino-acid chain: CTP synthase (547 aa).

Positions 1–267 (MTKFVFVTGG…AQQTLALLNL (267 aa)) are amidoligase domain. Ser-13 contributes to the CTP binding site. UTP is bound at residue Ser-13. ATP-binding positions include 14–19 (SIGKGI) and Asp-71. Residues Asp-71 and Glu-141 each coordinate Mg(2+). CTP is bound by residues 148–150 (DIE), 188–193 (KTKPTQ), and Lys-224. UTP contacts are provided by residues 188–193 (KTKPTQ) and Lys-224. One can recognise a Glutamine amidotransferase type-1 domain in the interval 292-534 (EIALVGKYVQ…VKAAVDHYST (243 aa)). L-glutamine is bound at residue Gly-354. Catalysis depends on Cys-381, which acts as the Nucleophile; for glutamine hydrolysis. L-glutamine is bound by residues 382–385 (LGMQ), Glu-405, and Arg-462. Active-site residues include His-507 and Glu-509.

This sequence belongs to the CTP synthase family. Homotetramer.

It carries out the reaction UTP + L-glutamine + ATP + H2O = CTP + L-glutamate + ADP + phosphate + 2 H(+). The catalysed reaction is L-glutamine + H2O = L-glutamate + NH4(+). It catalyses the reaction UTP + NH4(+) + ATP = CTP + ADP + phosphate + 2 H(+). The protein operates within pyrimidine metabolism; CTP biosynthesis via de novo pathway; CTP from UDP: step 2/2. Allosterically activated by GTP, when glutamine is the substrate; GTP has no effect on the reaction when ammonia is the substrate. The allosteric effector GTP functions by stabilizing the protein conformation that binds the tetrahedral intermediate(s) formed during glutamine hydrolysis. Inhibited by the product CTP, via allosteric rather than competitive inhibition. In terms of biological role, catalyzes the ATP-dependent amination of UTP to CTP with either L-glutamine or ammonia as the source of nitrogen. Regulates intracellular CTP levels through interactions with the four ribonucleotide triphosphates. In Rippkaea orientalis (strain PCC 8801 / RF-1) (Cyanothece sp. (strain PCC 8801)), this protein is CTP synthase.